The chain runs to 419 residues: ATP-dependent RNA helicase RhlB (419 aa).

The Q motif signature appears at 9–37 (QRFSDLALHRSVQQAIKEKGFEFCTPIQA). The Helicase ATP-binding domain maps to 40-217 (LPITLKGQDI…FEHMNDPQYV (178 aa)). Position 53-60 (53-60 (AQTGTGKT)) interacts with ATP. Residues 163–166 (DEAD) carry the DEAD box motif. The region spanning 241-388 (KMALLMTLLE…VSQYDAKALI (148 aa)) is the Helicase C-terminal domain.

It belongs to the DEAD box helicase family. RhlB subfamily. In terms of assembly, component of the RNA degradosome, which is a multiprotein complex involved in RNA processing and mRNA degradation.

It localises to the cytoplasm. The catalysed reaction is ATP + H2O = ADP + phosphate + H(+). Functionally, DEAD-box RNA helicase involved in RNA degradation. Has RNA-dependent ATPase activity and unwinds double-stranded RNA. The protein is ATP-dependent RNA helicase RhlB of Histophilus somni (strain 129Pt) (Haemophilus somnus).